Here is a 236-residue protein sequence, read N- to C-terminus: MSLTLFSFLSLVSILCIVTAAPVTNVNFTSIQVSSMQHIAAINKASFFSPTALPANATENGLTGSCKPIILIFAKGTGENGNVGDGSSPGPAWFSELRNAIGEDKIAVQGVQYEADVFGYLVGGDPEGSQNYLTITNQAVTQCPNSKIVIGGYSQGAQITHNAAQLYSPLVTSRIAAVVLFGDPYTDKPVGQVSPSSVLEICHDGDIICTGSGGPDPHLTYSKNATCAAKFVLDRI.

The signal sequence occupies residues 1 to 20; it reads MSLTLFSFLSLVSILCIVTA. The cysteines at positions 66 and 143 are disulfide-linked. The active-site Nucleophile is S154. A disulfide bond links C202 and C209. D206 is a catalytic residue. H218 serves as the catalytic Proton donor/acceptor.

This sequence belongs to the cutinase family. The 2 disulfide bonds play a critical role in holding the catalytic residues in juxta-position; reduction of the disulfide bridges results in the complete inactivation of the enzyme.

It localises to the secreted. It carries out the reaction cutin + H2O = cutin monomers.. Catalyzes the hydrolysis of complex carboxylic polyesters found in the cell wall of plants. Degrades cutin, a macromolecule that forms the structure of the plant cuticle. Allows pathogenic fungi to penetrate through the cuticular barrier into the host plant during the initial stage of fungal infection. The chain is Cutinase (CUT1) from Blumeria hordei (Barley powdery mildew).